A 46-amino-acid chain; its full sequence is Large ribosomal subunit protein bL33A (46 aa).

It belongs to the bacterial ribosomal protein bL33 family.

This is Large ribosomal subunit protein bL33A from Mesomycoplasma hyopneumoniae (strain 7448) (Mycoplasma hyopneumoniae).